The chain runs to 524 residues: Ribonuclease Y (524 aa).

Residues 3–23 form a helical membrane-spanning segment; sequence IVINLLLLVLAALVAFVAGFF. Residues 214–280 form the KH domain; sequence ALSVVHIQSD…KLTLKKLLAD (67 aa). In terms of domain architecture, HD spans 340–432; it reads LLQHSREVAM…VDAANTISLS (93 aa).

It belongs to the RNase Y family.

It is found in the cell membrane. Its function is as follows. Endoribonuclease that initiates mRNA decay. This Chlorobium chlorochromatii (strain CaD3) protein is Ribonuclease Y.